We begin with the raw amino-acid sequence, 165 residues long: Transcriptional repressor NrdR (165 aa).

A zinc finger lies at 3–34 (CPYCGQLNNRVVDSRLSRSEFAVRRRRECLDC). The 91-residue stretch at 49–139 (VMVVKKDGRR…VYREFKDVDD (91 aa)) folds into the ATP-cone domain.

The protein belongs to the NrdR family. It depends on Zn(2+) as a cofactor.

Functionally, negatively regulates transcription of bacterial ribonucleotide reductase nrd genes and operons by binding to NrdR-boxes. The sequence is that of Transcriptional repressor NrdR from Desulforapulum autotrophicum (strain ATCC 43914 / DSM 3382 / VKM B-1955 / HRM2) (Desulfobacterium autotrophicum).